A 363-amino-acid polypeptide reads, in one-letter code: tRNA/tmRNA (uracil-C(5))-methyltransferase (363 aa).

S-adenosyl-L-methionine-binding residues include glutamine 187, tyrosine 215, asparagine 220, glutamate 236, and aspartate 296. Cysteine 321 serves as the catalytic Nucleophile. The active-site Proton acceptor is glutamate 355.

It belongs to the class I-like SAM-binding methyltransferase superfamily. RNA M5U methyltransferase family. TrmA subfamily.

The enzyme catalyses uridine(54) in tRNA + S-adenosyl-L-methionine = 5-methyluridine(54) in tRNA + S-adenosyl-L-homocysteine + H(+). It carries out the reaction uridine(341) in tmRNA + S-adenosyl-L-methionine = 5-methyluridine(341) in tmRNA + S-adenosyl-L-homocysteine + H(+). Dual-specificity methyltransferase that catalyzes the formation of 5-methyluridine at position 54 (m5U54) in all tRNAs, and that of position 341 (m5U341) in tmRNA (transfer-mRNA). This is tRNA/tmRNA (uracil-C(5))-methyltransferase from Pseudomonas aeruginosa (strain LESB58).